The following is a 911-amino-acid chain: Anoctamin-6 (911 aa).

Topologically, residues 1 to 301 (MQMMTRKVLL…YGEKIGIYFA (301 aa)) are cytoplasmic. The helical transmembrane segment at 302-322 (WLGYYTQMLLLAAVVGVACFL) threads the bilayer. Topologically, residues 323–376 (YGYLDQDNCTWSKEVCDPDIGGQILMCPQCDRLCPFWRLNITCESSKKLCIFDS) are extracellular. A glycan (N-linked (GlcNAc...) asparagine) is linked at Asn-330. 5 disulfide bridges follow: Cys-331–Cys-372, Cys-338–Cys-365, Cys-349–Cys-807, Cys-352–Cys-356, and Cys-596–Cys-601. Residue Asn-362 is glycosylated (N-linked (GlcNAc...) asparagine). The helical transmembrane segment at 377-397 (FGTLIFAVFMGVWVTLFLEFW) threads the bilayer. Topologically, residues 398 to 456 (KRRQAELEYEWDTVELQQEEQARPEYEAQCNHVVINEITQEEERIPFTTCGKCIRVTLC) are cytoplasmic. Residues 457–477 (ASAVFFWILLIIASVIGIIVY) form a helical membrane-spanning segment. Over 478–510 (RLSVFIVFSTTLPKNPNGTDPIQKYLTPQMATS) the chain is Extracellular. A glycan (N-linked (GlcNAc...) asparagine) is linked at Asn-494. A helical transmembrane segment spans residues 511 to 531 (ITASIISFIIIMILNTIYEKV). The Cytoplasmic portion of the chain corresponds to 532 to 552 (AIMITNFELPRTQTDYENSLT). Residues 553-573 (MKMFLFQFVNYYSSCFYIAFF) traverse the membrane as a helical segment. The Extracellular segment spans residues 574 to 602 (KGKFVGYPGDPVYLLGKYRSEECDPGGCL). The chain crosses the membrane as a helical span at residues 603–622 (LELTTQLTIIMGGKAIWNNI). The Cytoplasmic portion of the chain corresponds to 623-664 (QEVLLPWVMNLIGRYKRVSGSEKITPRWEQDYHLQPMGKLGL). Residues Glu-624, Glu-667, and Glu-670 each coordinate Ca(2+). A run of 2 helical transmembrane segments spans residues 665–685 (FYEY…VASF) and 686–706 (PLAP…DAWK). Residues 707 to 723 (LTTQFRRMVPEKAQDIG) lie on the Cytoplasmic side of the membrane. A helical transmembrane segment spans residues 724-744 (AWQPIMQGIAILAVVTNAMII). At 745-837 (AFTSDMIPRL…YWHVIAAKLA (93 aa)) the chain is on the extracellular side. N-linked (GlcNAc...) asparagine glycosylation is found at Asn-778, Asn-785, and Asn-803. A helical membrane pass occupies residues 838 to 858 (FIIVMEHIIYSVKFFISYAIP). Residues 859-911 (DVSKITKSKIKREKYLTQKLLHESHLKDLTKNMGIIAERIGGTVDNSVRPKLE) are Cytoplasmic-facing.

Belongs to the anoctamin family. In terms of assembly, homodimer. In terms of tissue distribution, predominant expression seen in epithelial tissues. Also found in skeletal system where it is primarily expressed in osteoblasts.

Its subcellular location is the cell membrane. The enzyme catalyses a 1,2-diacyl-sn-glycero-3-phospho-L-serine(in) = a 1,2-diacyl-sn-glycero-3-phospho-L-serine(out). It catalyses the reaction a beta-D-galactosyl-(1&lt;-&gt;1')-N-acylsphing-4-enine(out) = a beta-D-galactosyl-(1&lt;-&gt;1')-N-acylsphing-4-enine(in). It carries out the reaction a 1,2-diacyl-sn-glycero-3-phosphocholine(in) = a 1,2-diacyl-sn-glycero-3-phosphocholine(out). Its activity is regulated as follows. Exhibits synergistic gating by Ca(2+) and voltage. Inhibited by some non-specific cation channel blockers such as: ruthenium red, 2-aminoethyl diphenylborinate (2APB), gadolinium and cadmium ions. Small-conductance calcium-activated nonselective cation (SCAN) channel which acts as a regulator of phospholipid scrambling in platelets, osteoblasts and fetal thymocytes. Phospholipid scrambling results in surface exposure of phosphatidylserine which in platelets is essential to trigger the clotting system whereas in osteoblasts is essential for the deposition of hydroxyapatite during bone mineralization. Has calcium-dependent phospholipid scramblase activity; scrambles phosphatidylserine, phosphatidylcholine and galactosylceramide. Can generate outwardly rectifying chloride channel currents in airway epithelial cells and Jurkat T lymphocytes. This chain is Anoctamin-6 (Ano6), found in Mus musculus (Mouse).